A 404-amino-acid chain; its full sequence is Phosphoglycerate kinase (404 aa).

Residues 21 to 23, Arg-36, 59 to 62, Arg-119, and Arg-162 each bind substrate; these read DFN and HLGR. Residues Lys-213, Gly-300, Glu-331, and 360 to 363 contribute to the ATP site; that span reads GGDS.

It belongs to the phosphoglycerate kinase family. In terms of assembly, monomer.

It is found in the cytoplasm. It catalyses the reaction (2R)-3-phosphoglycerate + ATP = (2R)-3-phospho-glyceroyl phosphate + ADP. It participates in carbohydrate degradation; glycolysis; pyruvate from D-glyceraldehyde 3-phosphate: step 2/5. The chain is Phosphoglycerate kinase from Oenococcus oeni (strain ATCC BAA-331 / PSU-1).